Consider the following 259-residue polypeptide: 5'-nucleotidase SurE (259 aa).

Residues Asp-10, Asp-11, Ser-41, and Asn-96 each coordinate a divalent metal cation.

The protein belongs to the SurE nucleotidase family. Requires a divalent metal cation as cofactor.

It is found in the cytoplasm. The enzyme catalyses a ribonucleoside 5'-phosphate + H2O = a ribonucleoside + phosphate. Functionally, nucleotidase that shows phosphatase activity on nucleoside 5'-monophosphates. This is 5'-nucleotidase SurE from Wolinella succinogenes (strain ATCC 29543 / DSM 1740 / CCUG 13145 / JCM 31913 / LMG 7466 / NCTC 11488 / FDC 602W) (Vibrio succinogenes).